An 860-amino-acid polypeptide reads, in one-letter code: Pentatricopeptide repeat-containing protein At1g18900 (860 aa).

8 PPR repeats span residues 363–397 (DGHT…GCQP), 398–432 (NTVT…GCKP), 433–467 (DRVT…GLSP), 468–502 (DTFT…GCTP), 503–537 (NLVT…GFEP), 538–572 (DKVT…NWIP), 573–607 (DEPV…GLRP), and 608–642 (NVPT…GLRP). Positions 760–843 (INLHVMSEGT…NSGCFVGSGE (84 aa)) constitute a Smr domain.

This sequence belongs to the PPR family. P subfamily.

The polypeptide is Pentatricopeptide repeat-containing protein At1g18900 (Arabidopsis thaliana (Mouse-ear cress)).